The following is a 340-amino-acid chain: Phosphoribosylformylglycinamidine cyclo-ligase (340 aa).

Belongs to the AIR synthase family.

The protein localises to the cytoplasm. It catalyses the reaction 2-formamido-N(1)-(5-O-phospho-beta-D-ribosyl)acetamidine + ATP = 5-amino-1-(5-phospho-beta-D-ribosyl)imidazole + ADP + phosphate + H(+). It functions in the pathway purine metabolism; IMP biosynthesis via de novo pathway; 5-amino-1-(5-phospho-D-ribosyl)imidazole from N(2)-formyl-N(1)-(5-phospho-D-ribosyl)glycinamide: step 2/2. This chain is Phosphoribosylformylglycinamidine cyclo-ligase, found in Streptococcus pneumoniae (strain P1031).